Consider the following 1129-residue polypeptide: Ubiquitin carboxyl-terminal hydrolase 15 (1129 aa).

Residues 1–26 (MVLSNVDAEEVNMDSSMELEESSQEP) are disordered. The span at 7 to 23 (DAEEVNMDSSMELEESS) shows a compositional bias: acidic residues. The MATH domain occupies 51–204 (HASYSWVVKN…NDEICISVTV (154 aa)). The USP domain occupies 230–545 (VGLKNQGATC…NAYMLVYFRK (316 aa)). Cys-239 serves as the catalytic Nucleophile. Residue His-481 is the Proton acceptor of the active site.

Belongs to the peptidase C19 family.

The protein resides in the nucleus. It carries out the reaction Thiol-dependent hydrolysis of ester, thioester, amide, peptide and isopeptide bonds formed by the C-terminal Gly of ubiquitin (a 76-residue protein attached to proteins as an intracellular targeting signal).. Hydrolase that deubiquitinates target proteins. Cleaves the UBL propeptide in sde2. Involved in regulating the steady-state levels of proteins including prp4. The sequence is that of Ubiquitin carboxyl-terminal hydrolase 15 from Schizosaccharomyces pombe (strain 972 / ATCC 24843) (Fission yeast).